The chain runs to 537 residues: Zinc finger and BTB domain-containing protein 18 (537 aa).

The BTB domain occupies 24–91 (CDSTVLVGDA…MYEGKLQFKS (68 aa)). Residues 122–143 (TAEADSTKREEDTSSCSDKVES) show a composition bias toward basic and acidic residues. Disordered regions lie at residues 122-232 (TAEA…RVSA) and 335-355 (ASEL…LGGD). 2 stretches are compositionally biased toward low complexity: residues 182–195 (RLPS…TTSP) and 208–229 (SPAG…ASRR). C2H2-type zinc fingers lie at residues 385-407 (FMCP…LSTH), 425-447 (PTCS…ERTH), 453-475 (YTCT…AVVH), and 481-504 (HACK…RKFH).

Belongs to the krueppel C2H2-type zinc-finger protein family. ZBTB18 subfamily.

The protein localises to the nucleus. Functionally, transcriptional repressor that plays a role in various developmental processes. Specifically binds the consensus DNA sequence 5'-[AC]ACATCTG[GT][AC]-3' which contains the E box core, and acts by recruiting chromatin remodeling multiprotein complexes. The protein is Zinc finger and BTB domain-containing protein 18 (zbtb18) of Danio rerio (Zebrafish).